Reading from the N-terminus, the 328-residue chain is Olfactory receptor 13A1 (328 aa).

The Extracellular segment spans residues methionine 1 to valine 43. A glycan (N-linked (GlcNAc...) asparagine) is linked at asparagine 23. Residues phenylalanine 44–threonine 64 traverse the membrane as a helical segment. Residues leucine 65–glycine 72 are Cytoplasmic-facing. Residues leucine 73–serine 93 form a helical membrane-spanning segment. The Extracellular portion of the chain corresponds to serine 94 to alanine 117. A disulfide bridge connects residues cysteine 115 and cysteine 207. A helical membrane pass occupies residues glutamine 118–tyrosine 138. Over aspartate 139 to valine 157 the chain is Cytoplasmic. The chain crosses the membrane as a helical span at residues phenylalanine 158 to threonine 178. Residues glycine 179–valine 215 are Extracellular-facing. The helical transmembrane segment at methionine 216–serine 235 threads the bilayer. The Cytoplasmic portion of the chain corresponds to tyrosine 236–alanine 255. Residues phenylalanine 256–alanine 276 traverse the membrane as a helical segment. At tyrosine 277–serine 289 the chain is on the extracellular side. Residues lysine 290 to leucine 310 form a helical membrane-spanning segment. At arginine 311–asparagine 328 the chain is on the cytoplasmic side.

This sequence belongs to the G-protein coupled receptor 1 family.

The protein localises to the cell membrane. Its function is as follows. Odorant receptor. The sequence is that of Olfactory receptor 13A1 (OR13A1) from Homo sapiens (Human).